Here is a 520-residue protein sequence, read N- to C-terminus: GMP synthase [glutamine-hydrolyzing] (520 aa).

The region spanning 8-202 (RLLIIDFGSQ…FVRLAGFTGD (195 aa)) is the Glutamine amidotransferase type-1 domain. The active-site Nucleophile is the Cys-86. Residues His-177 and Glu-179 contribute to the active site. A GMPS ATP-PPase domain is found at 203-395 (WTMDAYREQA…LGLPASFIGR (193 aa)). Position 230–236 (230–236 (SGGVDSS)) interacts with ATP.

As to quaternary structure, homodimer.

The enzyme catalyses XMP + L-glutamine + ATP + H2O = GMP + L-glutamate + AMP + diphosphate + 2 H(+). It participates in purine metabolism; GMP biosynthesis; GMP from XMP (L-Gln route): step 1/1. Catalyzes the synthesis of GMP from XMP. The polypeptide is GMP synthase [glutamine-hydrolyzing] (Dinoroseobacter shibae (strain DSM 16493 / NCIMB 14021 / DFL 12)).